A 356-amino-acid polypeptide reads, in one-letter code: UDP-N-acetylglucosamine--N-acetylmuramyl-(pentapeptide) pyrophosphoryl-undecaprenol N-acetylglucosamine transferase (356 aa).

UDP-N-acetyl-alpha-D-glucosamine is bound by residues 15-17 (TGG), Asn-127, Arg-163, Ser-191, Ile-244, 263-268 (ALTVSE), and Gln-288.

This sequence belongs to the glycosyltransferase 28 family. MurG subfamily.

It is found in the cell inner membrane. It catalyses the reaction di-trans,octa-cis-undecaprenyl diphospho-N-acetyl-alpha-D-muramoyl-L-alanyl-D-glutamyl-meso-2,6-diaminopimeloyl-D-alanyl-D-alanine + UDP-N-acetyl-alpha-D-glucosamine = di-trans,octa-cis-undecaprenyl diphospho-[N-acetyl-alpha-D-glucosaminyl-(1-&gt;4)]-N-acetyl-alpha-D-muramoyl-L-alanyl-D-glutamyl-meso-2,6-diaminopimeloyl-D-alanyl-D-alanine + UDP + H(+). The protein operates within cell wall biogenesis; peptidoglycan biosynthesis. Functionally, cell wall formation. Catalyzes the transfer of a GlcNAc subunit on undecaprenyl-pyrophosphoryl-MurNAc-pentapeptide (lipid intermediate I) to form undecaprenyl-pyrophosphoryl-MurNAc-(pentapeptide)GlcNAc (lipid intermediate II). The sequence is that of UDP-N-acetylglucosamine--N-acetylmuramyl-(pentapeptide) pyrophosphoryl-undecaprenol N-acetylglucosamine transferase from Yersinia pestis (strain Pestoides F).